Reading from the N-terminus, the 182-residue chain is ATP synthase subunit b, chloroplastic (182 aa).

Residues 31-53 traverse the membrane as a helical segment; it reads IINISVVLGVLVYFGKGVLSNLL.

Belongs to the ATPase B chain family. F-type ATPases have 2 components, F(1) - the catalytic core - and F(0) - the membrane proton channel. F(1) has five subunits: alpha(3), beta(3), gamma(1), delta(1), epsilon(1). F(0) has four main subunits: a(1), b(1), b'(1) and c(10-14). The alpha and beta chains form an alternating ring which encloses part of the gamma chain. F(1) is attached to F(0) by a central stalk formed by the gamma and epsilon chains, while a peripheral stalk is formed by the delta, b and b' chains.

The protein localises to the plastid. It localises to the chloroplast thylakoid membrane. Functionally, f(1)F(0) ATP synthase produces ATP from ADP in the presence of a proton or sodium gradient. F-type ATPases consist of two structural domains, F(1) containing the extramembraneous catalytic core and F(0) containing the membrane proton channel, linked together by a central stalk and a peripheral stalk. During catalysis, ATP synthesis in the catalytic domain of F(1) is coupled via a rotary mechanism of the central stalk subunits to proton translocation. Its function is as follows. Component of the F(0) channel, it forms part of the peripheral stalk, linking F(1) to F(0). In Welwitschia mirabilis (Tree tumbo), this protein is ATP synthase subunit b, chloroplastic.